A 212-amino-acid chain; its full sequence is Pyridoxine/pyridoxamine 5'-phosphate oxidase (212 aa).

Substrate-binding positions include 8–11 (RREY) and K66. FMN is bound by residues 61-66 (RIVLLK), 76-77 (FT), R82, K83, and Q105. Y123, R127, and S131 together coordinate substrate. FMN-binding positions include 140-141 (QS) and W185. 191–193 (RLH) is a binding site for substrate. R195 serves as a coordination point for FMN.

It belongs to the pyridoxamine 5'-phosphate oxidase family. As to quaternary structure, homodimer. FMN serves as cofactor.

The catalysed reaction is pyridoxamine 5'-phosphate + O2 + H2O = pyridoxal 5'-phosphate + H2O2 + NH4(+). The enzyme catalyses pyridoxine 5'-phosphate + O2 = pyridoxal 5'-phosphate + H2O2. The protein operates within cofactor metabolism; pyridoxal 5'-phosphate salvage; pyridoxal 5'-phosphate from pyridoxamine 5'-phosphate: step 1/1. It functions in the pathway cofactor metabolism; pyridoxal 5'-phosphate salvage; pyridoxal 5'-phosphate from pyridoxine 5'-phosphate: step 1/1. Catalyzes the oxidation of either pyridoxine 5'-phosphate (PNP) or pyridoxamine 5'-phosphate (PMP) into pyridoxal 5'-phosphate (PLP). The polypeptide is Pyridoxine/pyridoxamine 5'-phosphate oxidase (Shewanella frigidimarina (strain NCIMB 400)).